A 337-amino-acid chain; its full sequence is Lipoyl synthase (337 aa).

Positions 81, 86, 92, 107, 111, 114, and 323 each coordinate [4Fe-4S] cluster. The region spanning 93–312 is the Radical SAM core domain; it reads FSHGTATFMI…EDYGNALGFS (220 aa).

This sequence belongs to the radical SAM superfamily. Lipoyl synthase family. The cofactor is [4Fe-4S] cluster.

The protein resides in the cytoplasm. The enzyme catalyses [[Fe-S] cluster scaffold protein carrying a second [4Fe-4S](2+) cluster] + N(6)-octanoyl-L-lysyl-[protein] + 2 oxidized [2Fe-2S]-[ferredoxin] + 2 S-adenosyl-L-methionine + 4 H(+) = [[Fe-S] cluster scaffold protein] + N(6)-[(R)-dihydrolipoyl]-L-lysyl-[protein] + 4 Fe(3+) + 2 hydrogen sulfide + 2 5'-deoxyadenosine + 2 L-methionine + 2 reduced [2Fe-2S]-[ferredoxin]. It participates in protein modification; protein lipoylation via endogenous pathway; protein N(6)-(lipoyl)lysine from octanoyl-[acyl-carrier-protein]: step 2/2. Its function is as follows. Catalyzes the radical-mediated insertion of two sulfur atoms into the C-6 and C-8 positions of the octanoyl moiety bound to the lipoyl domains of lipoate-dependent enzymes, thereby converting the octanoylated domains into lipoylated derivatives. In Xanthomonas euvesicatoria pv. vesicatoria (strain 85-10) (Xanthomonas campestris pv. vesicatoria), this protein is Lipoyl synthase.